Reading from the N-terminus, the 195-residue chain is Imidazoleglycerol-phosphate dehydratase (195 aa).

It belongs to the imidazoleglycerol-phosphate dehydratase family.

The protein localises to the cytoplasm. It carries out the reaction D-erythro-1-(imidazol-4-yl)glycerol 3-phosphate = 3-(imidazol-4-yl)-2-oxopropyl phosphate + H2O. Its pathway is amino-acid biosynthesis; L-histidine biosynthesis; L-histidine from 5-phospho-alpha-D-ribose 1-diphosphate: step 6/9. In Methanosphaerula palustris (strain ATCC BAA-1556 / DSM 19958 / E1-9c), this protein is Imidazoleglycerol-phosphate dehydratase.